Here is a 359-residue protein sequence, read N- to C-terminus: Ribosomal RNA small subunit methyltransferase H (359 aa).

S-adenosyl-L-methionine is bound by residues 39–41 (AGH), Asp58, Phe87, Asp108, and Gln115. The tract at residues 339–359 (IQGSASPGRAKNTARIRTRRG) is disordered. Positions 350 to 359 (NTARIRTRRG) are enriched in basic residues.

The protein belongs to the methyltransferase superfamily. RsmH family.

Its subcellular location is the cytoplasm. The enzyme catalyses cytidine(1402) in 16S rRNA + S-adenosyl-L-methionine = N(4)-methylcytidine(1402) in 16S rRNA + S-adenosyl-L-homocysteine + H(+). In terms of biological role, specifically methylates the N4 position of cytidine in position 1402 (C1402) of 16S rRNA. The sequence is that of Ribosomal RNA small subunit methyltransferase H from Bifidobacterium longum subsp. infantis (strain ATCC 15697 / DSM 20088 / JCM 1222 / NCTC 11817 / S12).